A 192-amino-acid polypeptide reads, in one-letter code: Phosphomevalonate kinase (192 aa).

Residues 17-23 (KRKSGKD) and Arg141 each bind ATP. Asn170 serves as a coordination point for substrate. Residues His171 and Gln180 each contribute to the ATP site.

Monomer.

The protein resides in the cytoplasm. It localises to the cytosol. It catalyses the reaction (R)-5-phosphomevalonate + ATP = (R)-5-diphosphomevalonate + ADP. Its pathway is isoprenoid biosynthesis; isopentenyl diphosphate biosynthesis via mevalonate pathway; isopentenyl diphosphate from (R)-mevalonate: step 2/3. In terms of biological role, catalyzes the reversible ATP-dependent phosphorylation of mevalonate 5-phosphate to produce mevalonate diphosphate and ADP, a key step in the mevalonic acid mediated biosynthesis of isopentenyl diphosphate and other polyisoprenoid metabolites. In Bos taurus (Bovine), this protein is Phosphomevalonate kinase (PMVK).